We begin with the raw amino-acid sequence, 351 residues long: tRNA-splicing endonuclease (351 aa).

Active-site residues include tyrosine 287, histidine 298, and lysine 329.

Belongs to the tRNA-intron endonuclease family. Archaeal long subfamily. Homodimer.

The enzyme catalyses pretRNA = a 3'-half-tRNA molecule with a 5'-OH end + a 5'-half-tRNA molecule with a 2',3'-cyclic phosphate end + an intron with a 2',3'-cyclic phosphate and a 5'-hydroxyl terminus.. Endonuclease that removes tRNA introns. Cleaves pre-tRNA at the 5'- and 3'-splice sites to release the intron. The products are an intron and two tRNA half-molecules bearing 2',3' cyclic phosphate and 5'-OH termini. Recognizes a pseudosymmetric substrate in which 2 bulged loops of 3 bases are separated by a stem of 4 bp. The protein is tRNA-splicing endonuclease of Methanococcoides burtonii (strain DSM 6242 / NBRC 107633 / OCM 468 / ACE-M).